Consider the following 428-residue polypeptide: Histone deacetylase 3 (428 aa).

Positions 3-316 (KTVAYFYDPD…WTYETSLLVE (314 aa)) are histone deacetylase. Residues His-17, Gly-21, and Lys-25 each contribute to the 1D-myo-inositol 1,4,5,6-tetrakisphosphate site. His-135 is an active-site residue. Zn(2+)-binding residues include Asp-170, His-172, and Asp-259. Arg-265 contributes to the 1D-myo-inositol 1,4,5,6-tetrakisphosphate binding site. Composition is skewed to basic and acidic residues over residues 388–405 (DRTDEADAEERGPEENYS) and 415–428 (DGDHDNDKESDVEI). Residues 388 to 428 (DRTDEADAEERGPEENYSRPEAPNEFYDGDHDNDKESDVEI) are disordered. At Ser-424 the chain carries Phosphoserine.

The protein belongs to the histone deacetylase family. HD type 1 subfamily. In terms of assembly, interacts with HDAC7 and HDAC9. Interacts with HDAC10, DAXX and DACH1. Found in a complex with NCOR1 and NCOR2. Component of the N-Cor repressor complex, at least composed of NCOR1, NCOR2, HDAC3, TBL1X, TBL1R, CORO2A and GPS2. Interacts with BCOR, MJD2A/JHDM3A, NRIP1, PRDM6 and SRY. Interacts with BTBD14B. Interacts with GLIS2. Interacts (via the DNA-binding domain) with NR2C1; the interaction recruits phosphorylated NR2C1 to PML bodies for sumoylation. Component of the Notch corepressor complex. Interacts with CBFA2T3 and NKAP. Interacts with APEX1; the interaction is not dependent on the acetylated status of APEX1. Interacts with and deacetylates MAPK14. Interacts with ZMYND15. Interacts with SMRT/NCOR2 and BCL6 on DNA enhancer elements. Interacts with INSM1. Interacts with XBP1; the interaction occurs in endothelial cell (EC) under disturbed flow. Interacts (via C-terminus) with CCAR2 (via N-terminus). Interacts with and deacetylates MEF2D. Interacts with BEND3. Interacts with NKAPL. Interacts with DHX36; this interaction occurs in a RNA-dependent manner. Interacts weakly with CRY1; this interaction is enhanced in the presence of FBXL3. Interacts with FBXL3 and BMAL1. Interacts with NCOR1. Interacts with RARA. Interacts with SETD5. In terms of processing, deubiquitinated on 'Lys-63'-linked ubiquitin chains by USP38; leading to a decreased level of histone acetylation. Sumoylated in vitro.

It is found in the nucleus. Its subcellular location is the chromosome. It localises to the cytoplasm. The protein localises to the cytosol. It carries out the reaction N(6)-acetyl-L-lysyl-[histone] + H2O = L-lysyl-[histone] + acetate. It catalyses the reaction N(6)-acetyl-L-lysyl-[protein] + H2O = L-lysyl-[protein] + acetate. The catalysed reaction is N(6)-(2E)-butenoyl-L-lysyl-[protein] + H2O = (2E)-2-butenoate + L-lysyl-[protein]. The enzyme catalyses N(6)-(2-hydroxyisobutanoyl)-L-lysyl-[protein] + H2O = 2-hydroxy-2-methylpropanoate + L-lysyl-[protein]. It carries out the reaction N(6)-[(S)-lactoyl]-L-lysyl-[protein] + H2O = (S)-lactate + L-lysyl-[protein]. With respect to regulation, inositol tetraphosphate (1D-myo-inositol 1,4,5,6-tetrakisphosphate) promotes the histone deacetylase activity by acting as an intermolecular glue between HDAC3 and NCOR2, thereby promoting its association with the N-Cor complex, a prerequisite for the histone deacetylase activity. Functionally, histone deacetylase that catalyzes the deacetylation of lysine residues on the N-terminal part of the core histones (H2A, H2B, H3 and H4), and some other non-histone substrates. Histone deacetylation gives a tag for epigenetic repression and plays an important role in transcriptional regulation, cell cycle progression and developmental events. Histone deacetylases act via the formation of large multiprotein complexes, such as N-Cor repressor complex, which activate the histone deacetylase activity. Participates in the BCL6 transcriptional repressor activity by deacetylating the H3 'Lys-27' (H3K27) on enhancer elements, antagonizing EP300 acetyltransferase activity and repressing proximal gene expression. Acts as a molecular chaperone for shuttling phosphorylated NR2C1 to PML bodies for sumoylation. Contributes, together with XBP1 isoform 1, to the activation of NFE2L2-mediated HMOX1 transcription factor gene expression in a PI(3)K/mTORC2/Akt-dependent signaling pathway leading to endothelial cell (EC) survival under disturbed flow/oxidative stress. Regulates both the transcriptional activation and repression phases of the circadian clock in a deacetylase activity-independent manner. During the activation phase, promotes the accumulation of ubiquitinated BMAL1 at the E-boxes and during the repression phase, blocks FBXL3-mediated CRY1/2 ubiquitination and promotes the interaction of CRY1 and BMAL1. The NCOR1-HDAC3 complex regulates the circadian expression of the core clock gene BMAL1 and the genes involved in lipid metabolism in the liver. Also functions as a deacetylase for non-histone targets, such as KAT5, MEF2D, MAPK14, RARA and STAT3. Serves as a corepressor of RARA, mediating its deacetylation and repression, leading to inhibition of RARE DNA element binding. In association with RARA, plays a role in the repression of microRNA-10a and thereby in the inflammatory response. In addition to protein deacetylase activity, also acts as a protein-lysine deacylase by recognizing other acyl groups: catalyzes removal of (2E)-butenoyl (crotonyl), lactoyl (lactyl) and 2-hydroxyisobutanoyl (2-hydroxyisobutyryl) acyl groups from lysine residues, leading to protein decrotonylation, delactylation and de-2-hydroxyisobutyrylation, respectively. Catalyzes decrotonylation of MAPRE1/EB1. Mediates delactylation NBN/NBS1, thereby inhibiting DNA double-strand breaks (DSBs) via homologous recombination (HR). The protein is Histone deacetylase 3 (HDAC3) of Pongo abelii (Sumatran orangutan).